We begin with the raw amino-acid sequence, 492 residues long: Catalase isozyme 1 (492 aa).

Catalysis depends on residues histidine 65 and asparagine 138. Heme is bound at residue tyrosine 348.

The protein belongs to the catalase family. Homotetramer. Heme is required as a cofactor.

Its subcellular location is the peroxisome. The enzyme catalyses 2 H2O2 = O2 + 2 H2O. Occurs in almost all aerobically respiring organisms and serves to protect cells from the toxic effects of hydrogen peroxide. The chain is Catalase isozyme 1 (CAT1) from Gossypium hirsutum (Upland cotton).